The sequence spans 250 residues: Ubiquinone/menaquinone biosynthesis C-methyltransferase UbiE (250 aa).

Residues Thr74, Asp94, 122–123, and Ser139 each bind S-adenosyl-L-methionine; that span reads DA.

The protein belongs to the class I-like SAM-binding methyltransferase superfamily. MenG/UbiE family.

The enzyme catalyses a 2-demethylmenaquinol + S-adenosyl-L-methionine = a menaquinol + S-adenosyl-L-homocysteine + H(+). The catalysed reaction is a 2-methoxy-6-(all-trans-polyprenyl)benzene-1,4-diol + S-adenosyl-L-methionine = a 5-methoxy-2-methyl-3-(all-trans-polyprenyl)benzene-1,4-diol + S-adenosyl-L-homocysteine + H(+). Its pathway is quinol/quinone metabolism; menaquinone biosynthesis; menaquinol from 1,4-dihydroxy-2-naphthoate: step 2/2. It participates in cofactor biosynthesis; ubiquinone biosynthesis. Its function is as follows. Methyltransferase required for the conversion of demethylmenaquinol (DMKH2) to menaquinol (MKH2) and the conversion of 2-polyprenyl-6-methoxy-1,4-benzoquinol (DDMQH2) to 2-polyprenyl-3-methyl-6-methoxy-1,4-benzoquinol (DMQH2). The chain is Ubiquinone/menaquinone biosynthesis C-methyltransferase UbiE from Paracoccus denitrificans (strain Pd 1222).